The sequence spans 1418 residues: ABC transporter G family member 38 (1418 aa).

Positions 1–27 are disordered; it reads MAHYRVSSEVENIMNRDRSHRKNEEED. The region spanning 147–419 is the ABC transporter 1 domain; that stretch reads TKIRVLPDRK…FEFMGFKCPE (273 aa). 179–186 is an ATP binding site; the sequence is GPPGSGKS. Residues 497–710 enclose the ABC transmembrane type-2 1 domain; sequence ELLKACLERE…IQTAVSVNEF (214 aa). The next 6 helical transmembrane spans lie at 516–536, 548–568, 600–620, 634–654, 659–679, and 729–749; these read TFVLKSLQLIINAILIGVVFW, GIIYMGAIYLEVQMIVFSGFF, IITFPLSFVEVFIVVLITYFT, YLVLALCGQMSYGLFRCIAAV, VVSNTMGCLAVMWLMTFSGYV, and FFVETYWYWIGLLALILSTIL. The ABC transporter 2 domain occupies 821–1073; that stretch reads MTFENITYSV…QLIEYFEGIR (253 aa). 866-873 is an ATP binding site; the sequence is GVSGAGKT. Residues 1146-1360 form the ABC transmembrane type-2 2 domain; it reads SQFQACLWKQ…GLYGLTIAQY (215 aa). 7 consecutive transmembrane segments (helical) span residues 1167-1187, 1197-1217, 1249-1269, 1284-1304, 1310-1330, 1341-1361, and 1387-1407; these read AVRFSFGAAVGIMYGIIFWSL, IFNSVGAMSTVVGFLSSQSAA, VIIEIPYTMAQACIYGVIVYG, IFFTFISILYSIYTGIMVISV, IASILNGVISTSWNVFSGFTI, WFTYVCPGWWGLYGLTIAQYG, and FLWVVSLTLIAFSMFFVFIYA.

The protein belongs to the ABC transporter superfamily. ABCG family. PDR (TC 3.A.1.205) subfamily. Expressed in roots and siliques at low levels.

The protein localises to the membrane. Its function is as follows. May be a general defense protein. The protein is ABC transporter G family member 38 (ABCG38) of Arabidopsis thaliana (Mouse-ear cress).